Consider the following 545-residue polypeptide: T-box transcription factor TBX4 (545 aa).

The T-box DNA-binding region spans 71-251 (LHEKELWKKF…NNPFAKGFRG (181 aa)). The disordered stretch occupies residues 479 to 509 (QSQVRERGPSASFPRERGLPQGCERKPPSPH). Residues 482-505 (VRERGPSASFPRERGLPQGCERKP) show a composition bias toward basic and acidic residues. Serine 507 is modified (phosphoserine).

It is found in the nucleus. Transcriptional regulator that has an essential role in the organogenesis of lungs, pelvis, and hindlimbs. The protein is T-box transcription factor TBX4 (TBX4) of Homo sapiens (Human).